Here is a 347-residue protein sequence, read N- to C-terminus: MRIEEDLKLGFKDVLIRPKRSTLKSRSDVELERQFTFKHSDQSWSGVPIIAANMDTVGTFSMASALASFDILTAVHKHYSVEEWQAFINNSSADVLKHVMVSTGTSDADFEKTKQILDLNPALNFVCIDVANGYSEHVVQFVAKAREAWPTKTICAGNVVTGEMCEELILSGADIVKVGIGPGSVCTTRVKTGVGYPQLSAVIECADAAHGLGGMIVSDGGCTTPGDVAKAFGGGADFVMLGGMLAGHEESGGRIVEENGEKFMLFYGMSSESAMKRHVGGVAEYRAAEGKTVKLPLRGPVENTARDILGGLRSACTYVGASRLKELTKRTTFIRVQEQENRIFNNL.

An NADP(+)-binding site is contributed by 108-131; sequence ADFEKTKQILDLNPALNFVCIDVA. K(+) contacts are provided by Gly181 and Gly183. Cys186 acts as the Thioimidate intermediate in catalysis. 216–239 contacts NADP(+); sequence IVSDGGCTTPGDVAKAFGGGADFV.

Belongs to the IMPDH/GMPR family. GuaC type 1 subfamily. In terms of assembly, homotetramer.

It carries out the reaction IMP + NH4(+) + NADP(+) = GMP + NADPH + 2 H(+). Catalyzes the irreversible NADPH-dependent deamination of GMP to IMP. It functions in the conversion of nucleobase, nucleoside and nucleotide derivatives of G to A nucleotides, and in maintaining the intracellular balance of A and G nucleotides. The polypeptide is GMP reductase (Shigella boydii serotype 18 (strain CDC 3083-94 / BS512)).